The following is a 259-amino-acid chain: Phosphatidylglycerol--prolipoprotein diacylglyceryl transferase (259 aa).

4 helical membrane passes run Ile-9–Ile-29, Phe-55–Tyr-75, Glu-92–Cys-112, and Ile-117–Gly-137. Arg-138 contacts a 1,2-diacyl-sn-glycero-3-phospho-(1'-sn-glycerol). The next 3 helical transmembrane spans lie at Gln-172–Phe-192, Gly-201–Phe-221, and Ile-228–Leu-248.

This sequence belongs to the Lgt family.

Its subcellular location is the cell inner membrane. It catalyses the reaction L-cysteinyl-[prolipoprotein] + a 1,2-diacyl-sn-glycero-3-phospho-(1'-sn-glycerol) = an S-1,2-diacyl-sn-glyceryl-L-cysteinyl-[prolipoprotein] + sn-glycerol 1-phosphate + H(+). The protein operates within protein modification; lipoprotein biosynthesis (diacylglyceryl transfer). Catalyzes the transfer of the diacylglyceryl group from phosphatidylglycerol to the sulfhydryl group of the N-terminal cysteine of a prolipoprotein, the first step in the formation of mature lipoproteins. The polypeptide is Phosphatidylglycerol--prolipoprotein diacylglyceryl transferase (Rickettsia africae (strain ESF-5)).